The primary structure comprises 300 residues: Fe(3+) dicitrate-binding periplasmic protein FecB (300 aa).

An N-terminal signal peptide occupies residues 1–21 (MLAFIRFLFAGLLLVISHAFA). One can recognise a Fe/B12 periplasmic-binding domain in the interval 39-295 (RIVVLELSFA…DTVKIFHHQP (257 aa)).

This sequence belongs to the bacterial solute-binding protein 8 family. In terms of assembly, the complex is composed of two ATP-binding proteins (FecE), two transmembrane proteins (FecC and FecD) and a solute-binding protein (FecB). Interacts with FecC and FecD.

The protein resides in the periplasm. In terms of biological role, part of the ABC transporter complex FecBCDE involved in citrate-dependent Fe(3+) uptake. Binds both iron-free and iron-loaded citrate although it binds iron-loaded citrate with a higher affinity. Binds different forms of Fe(3+)-citrate as well as citrate complexed with various representative Fe(3+)-mimics (Ga(3+), Al(3+), Sc(3+) and In(3+)) and a representative divalent metal ion (Mg(2+)). Can also bind various tricarboxylates in iron-free and iron-loaded form. The sequence is that of Fe(3+) dicitrate-binding periplasmic protein FecB from Escherichia coli (strain K12).